We begin with the raw amino-acid sequence, 78 residues long: Acyl carrier protein (78 aa).

Positions 2 to 77 (STIEERVKKI…AAIDYINGHQ (76 aa)) constitute a Carrier domain. Ser37 bears the O-(pantetheine 4'-phosphoryl)serine mark.

It belongs to the acyl carrier protein (ACP) family. Post-translationally, 4'-phosphopantetheine is transferred from CoA to a specific serine of apo-ACP by AcpS. This modification is essential for activity because fatty acids are bound in thioester linkage to the sulfhydryl of the prosthetic group.

The protein localises to the cytoplasm. It participates in lipid metabolism; fatty acid biosynthesis. Carrier of the growing fatty acid chain in fatty acid biosynthesis. The sequence is that of Acyl carrier protein from Erwinia tasmaniensis (strain DSM 17950 / CFBP 7177 / CIP 109463 / NCPPB 4357 / Et1/99).